We begin with the raw amino-acid sequence, 351 residues long: Nicotinate-nucleotide--dimethylbenzimidazole phosphoribosyltransferase (351 aa).

Glutamate 319 (proton acceptor) is an active-site residue.

The protein belongs to the CobT family.

The catalysed reaction is 5,6-dimethylbenzimidazole + nicotinate beta-D-ribonucleotide = alpha-ribazole 5'-phosphate + nicotinate + H(+). The protein operates within nucleoside biosynthesis; alpha-ribazole biosynthesis; alpha-ribazole from 5,6-dimethylbenzimidazole: step 1/2. Functionally, catalyzes the synthesis of alpha-ribazole-5'-phosphate from nicotinate mononucleotide (NAMN) and 5,6-dimethylbenzimidazole (DMB). This Desulforamulus reducens (strain ATCC BAA-1160 / DSM 100696 / MI-1) (Desulfotomaculum reducens) protein is Nicotinate-nucleotide--dimethylbenzimidazole phosphoribosyltransferase.